Here is a 413-residue protein sequence, read N- to C-terminus: Multifunctional CCA protein (413 aa).

2 residues coordinate ATP: G8 and R11. Residues G8 and R11 each coordinate CTP. Mg(2+) contacts are provided by D21 and D23. Positions 91, 143, and 146 each coordinate ATP. CTP is bound by residues R91, R143, and R146. Residues 232-333 enclose the HD domain; that stretch reads TGVHVMMVID…VRLLERADAL (102 aa).

It belongs to the tRNA nucleotidyltransferase/poly(A) polymerase family. Bacterial CCA-adding enzyme type 1 subfamily. In terms of assembly, monomer. Can also form homodimers and oligomers. It depends on Mg(2+) as a cofactor. Ni(2+) is required as a cofactor.

The catalysed reaction is a tRNA precursor + 2 CTP + ATP = a tRNA with a 3' CCA end + 3 diphosphate. It carries out the reaction a tRNA with a 3' CCA end + 2 CTP + ATP = a tRNA with a 3' CCACCA end + 3 diphosphate. Functionally, catalyzes the addition and repair of the essential 3'-terminal CCA sequence in tRNAs without using a nucleic acid template. Adds these three nucleotides in the order of C, C, and A to the tRNA nucleotide-73, using CTP and ATP as substrates and producing inorganic pyrophosphate. tRNA 3'-terminal CCA addition is required both for tRNA processing and repair. Also involved in tRNA surveillance by mediating tandem CCA addition to generate a CCACCA at the 3' terminus of unstable tRNAs. While stable tRNAs receive only 3'-terminal CCA, unstable tRNAs are marked with CCACCA and rapidly degraded. The chain is Multifunctional CCA protein from Burkholderia pseudomallei (strain 668).